We begin with the raw amino-acid sequence, 66 residues long: UPF0337 protein BA_0987/GBAA_0987/BAS0923 (66 aa).

The interval 1–22 (MSESGLKEQITGKVEKTKGQVK) is disordered. Over residues 13–22 (KVEKTKGQVK) the composition is skewed to basic and acidic residues.

It belongs to the UPF0337 (CsbD) family.

This is UPF0337 protein BA_0987/GBAA_0987/BAS0923 from Bacillus anthracis.